A 746-amino-acid polypeptide reads, in one-letter code: MHPILFPPTLDNIRKITASLVAAAKASGHRRALVLSGDREWCLQAAQVSLASTSLEPVLWIAAQAPENAWRMEAAKAHRSLGQEVDAIVFDAYSGFDLDAFGIITGAIRGGGLLLLLTPPLAAWPSFNDPEHARIVTAPYEVTEVTGRFLKRLVRILREAEGVIIIEQGKILPSVPFAAPARAETGGNPPSPGDSACRTEDQGRAVEAIVKVVTGQRRRPVVLTSDRGRGKSAALGIAAARLLQRGLKHIIVTGPRLDAVEPVFRHAQRLLPQATVSRAALHLPEAGMEFAPPDDLIRTSRPADLLLVDEAATIPTPLLERLLQGYSRIAFATTIHGYEGTGRGFALRFHRVLDEKTRGWKGLRLETPIRWRSGDPLEHFVFRALLLDATAAPDSAVASARPETVAVERLDRDALVRDEATLSELFGLLVLAHYQTRPYDLRHLLDGPNLSVYVMRYRGHVVATALLAAEGGFVEETARGIWEGRTRPHGHLLPESLAAHLGLAQAPRLHCARIMRIAVHPAVQGQGLGTHLVDTIIRETGGEGLDYLGSSFGATVELLRFWERLDFLPVRLSVKRGATSGAHSAIVLHPLSSSGQALVKRARERFLVHLPHQLADPLRELEPQLAAWLLRRGDPAGPLPLDSQDWSDVLAFAFGRRVYEVCIGPIWKLTWGALAAPESATLLGEVERNALIVKVLQKRSWQEAAAALELSGRAQVIEVLRRTLRPLVLHFGNEAVRREAERLAGG.

The tract at residues 181-200 (ARAETGGNPPSPGDSACRTE) is disordered. ATP-binding positions include Gln-202, 228–237 (GRGKSAALGI), and Arg-370. The 213-residue stretch at 405-617 (VAVERLDRDA…VHLPHQLADP (213 aa)) folds into the N-acetyltransferase domain. Acetyl-CoA contacts are provided by residues 517–519 (IAV), 524–530 (QGQGLGT), Glu-557, and Arg-564.

Belongs to the RNA cytidine acetyltransferase family. TmcA subfamily.

It is found in the cytoplasm. It catalyses the reaction cytidine(34) in elongator tRNA(Met) + acetyl-CoA + ATP + H2O = N(4)-acetylcytidine(34) in elongator tRNA(Met) + ADP + phosphate + CoA + H(+). Its function is as follows. Catalyzes the formation of N(4)-acetylcytidine (ac(4)C) at the wobble position of tRNA(Met), by using acetyl-CoA as an acetyl donor and ATP (or GTP). The protein is tRNA(Met) cytidine acetyltransferase TmcA of Nitrosococcus halophilus (strain Nc4).